The primary structure comprises 256 residues: Putative adhesin P1-like protein MPN_132 (256 aa).

Residues 56 to 72 show a composition bias toward low complexity; it reads AVSESQAATSSTTTTAT. 2 disordered regions span residues 56–115 and 149–235; these read AVSE…PYLH and FGTD…EVVG. A compositionally biased stretch (polar residues) spans 96-112; that stretch reads KASTQGSGQTNSQNTSP. Low complexity-rich tracts occupy residues 155 to 179 and 211 to 222; these read TQPQPQPLKTTTPVFGTNSGNLGSV and STSDGNTSSTNN.

Belongs to the adhesin P1 family.

The chain is Putative adhesin P1-like protein MPN_132 from Mycoplasma pneumoniae (strain ATCC 29342 / M129 / Subtype 1) (Mycoplasmoides pneumoniae).